Here is a 316-residue protein sequence, read N- to C-terminus: Zinc finger protein 330 (316 aa).

The tract at residues 1–24 (MPKKKTGARKKAENRREREKQLRA) is disordered. The Nuclear localization signal motif lies at 3 to 11 (KKKTGARKK). Basic and acidic residues predominate over residues 10–22 (KKAENRREREKQL). 4 consecutive C4-type zinc fingers follow at residues 42–58 (CDKCQRRQKNRAFCYFC), 67–104 (CAQCGKTKCMMKSSDCVIKHAGVYSTGLAMVGAICDFC), 129–149 (CVECERGVWDHGGRIFSCSFC), and 175–189 (CVSCNRLGQHSCLRC). A disordered region spans residues 227 to 299 (SMSTRSLKFG…ESSDLFNNLN (73 aa)). The span at 268 to 291 (DDDEEEDEAEDEEEEDGKDSDAES) shows a compositional bias: acidic residues. S287 is modified (phosphoserine).

The protein belongs to the NOA36 family.

Its subcellular location is the nucleus. The protein localises to the nucleolus. It localises to the chromosome. It is found in the centromere. The polypeptide is Zinc finger protein 330 (Znf330) (Mus musculus (Mouse)).